Consider the following 884-residue polypeptide: Coatomer subunit gamma-1 (884 aa).

HEAT repeat units follow at residues 65-100, 101-138, 286-323, 325-357, and 358-395; these read VEAT…SPSS, DEVI…GTLL, RELA…TRPL, VTNC…TGNE, and SSVD…KFPL. A disordered region spans residues 592-612; the sequence is QPLQEKKAPGKKPPAGAPAPA. The segment covering 602–612 has biased composition (pro residues); it reads KKPPAGAPAPA.

Belongs to the COPG family. As to quaternary structure, oligomeric complex that consists of at least the alpha, beta, beta', gamma, delta, epsilon and zeta subunits.

The protein localises to the cytoplasm. Its subcellular location is the golgi apparatus membrane. It localises to the cytoplasmic vesicle. It is found in the COPI-coated vesicle membrane. Its function is as follows. The coatomer is a cytosolic protein complex that binds to dilysine motifs and reversibly associates with Golgi non-clathrin-coated vesicles, which further mediate biosynthetic protein transport from the ER, via the Golgi up to the trans Golgi network. Coatomer complex is required for budding from Golgi membranes, and is essential for the retrograde Golgi-to-ER transport of dilysine-tagged proteins. The chain is Coatomer subunit gamma-1 from Oryza sativa subsp. japonica (Rice).